The primary structure comprises 501 residues: MTDQVQLDENKLIAERRGKLDHIRQACKANGHPNDFRRDSLAADLQSEFGEKTKEELEELNHIVAIAGRVMAKRGPFLLIQEVSGKIQAYASKDVQKELKEKYQGLDIGDIIGVKGALHKSGKGDLYVNMEEFVLLTKALRPLPEKFHGLTDQEMRYRQRYVDLIVNEDSRTAFIIRSKVVSAIRNFMVDKGFMEVETPMMHVIPGGASARPFVTHHNALDVDMYLRVAPELYLKRLVVGGFERVFEINRNFRNEGLSPRHNPEFTMMEFYMAYADYNDLMDLTEAMLSQVAISVLGSDKMPYGEYTVDFGGKYARLSMLDAIKMYNPEHAEIQALTYDGVQDRDLMVSIAKSVHVEVESFWTCGQLLEEIFGETAEPKLMQPTFITEYPADISPLARRNDNNAFITDRFEFFIGGREVANGFSELNDAQDQDERFKAQVSAKESGDDEAMFYDADYITALEHGLPPTAGQGIGIDRLVMLFTNTHTIRDVILFPSMRPQA.

Mg(2+) is bound by residues E411 and E418.

This sequence belongs to the class-II aminoacyl-tRNA synthetase family. In terms of assembly, homodimer. Mg(2+) is required as a cofactor.

It localises to the cytoplasm. It carries out the reaction tRNA(Lys) + L-lysine + ATP = L-lysyl-tRNA(Lys) + AMP + diphosphate. In Aliivibrio salmonicida (strain LFI1238) (Vibrio salmonicida (strain LFI1238)), this protein is Lysine--tRNA ligase.